The chain runs to 373 residues: Sterol-4-alpha-carboxylate 3-dehydrogenase, decarboxylating (373 aa).

Met1 carries the N-acetylmethionine modification. Thr22 carries the phosphothreonine modification. The Proton acceptor role is filled by Tyr172. Lys176 lines the NAD(+) pocket. A helical membrane pass occupies residues 298–318 (WVAYYLALLLSLLVMVISPVI). The short motif at 370–373 (RRVK) is the Prevents secretion from ER element.

It belongs to the 3-beta-HSD family. Homodimer. Brain, heart, liver, lung, kidney, skin and placenta.

It localises to the endoplasmic reticulum membrane. Its subcellular location is the lipid droplet. The enzyme catalyses a 3beta-hydroxysteroid-4alpha-carboxylate + NADP(+) = a 3-oxosteroid + CO2 + NADPH. It catalyses the reaction a 3beta-hydroxysteroid-4alpha-carboxylate + NAD(+) = a 3-oxosteroid + CO2 + NADH. It carries out the reaction 4alpha-carboxyzymosterol + NADP(+) = zymosterone + CO2 + NADPH. The catalysed reaction is 4alpha-carboxy-4beta-methyl-5alpha-cholest-8-en-3beta-ol + NADP(+) = 4alpha-methyl-5alpha-cholest-8-en-3-one + CO2 + NADPH. The enzyme catalyses 4alpha-carboxy-5alpha-cholest-8-ene-3beta-ol + NADP(+) = 5alpha-cholest-8-en-3-one + CO2 + NADPH. It catalyses the reaction 4beta-methylzymosterol-4alpha-carboxylate + NADP(+) = 3-dehydro-4-methylzymosterol + CO2 + NADPH. It carries out the reaction 4beta-methylzymosterol-4alpha-carboxylate + NAD(+) = 3-dehydro-4-methylzymosterol + CO2 + NADH. The catalysed reaction is 4alpha-carboxy-5alpha-cholest-8-ene-3beta-ol + NAD(+) = 5alpha-cholest-8-en-3-one + CO2 + NADH. The enzyme catalyses 4alpha-carboxy-4beta-methyl-5alpha-cholest-8-en-3beta-ol + NAD(+) = 4alpha-methyl-5alpha-cholest-8-en-3-one + CO2 + NADH. It catalyses the reaction 4alpha-carboxyzymosterol + NAD(+) = zymosterone + CO2 + NADH. Its pathway is steroid biosynthesis; zymosterol biosynthesis; zymosterol from lanosterol: step 4/6. Functionally, catalyzes the NAD(P)(+)-dependent oxidative decarboxylation of the C4 methyl groups of 4-alpha-carboxysterols in post-squalene cholesterol biosynthesis. Also plays a role in the regulation of the endocytic trafficking of EGFR. The chain is Sterol-4-alpha-carboxylate 3-dehydrogenase, decarboxylating (NSDHL) from Homo sapiens (Human).